A 249-amino-acid chain; its full sequence is Probable phosphatase VV2_1469 (249 aa).

Positions 8, 10, 16, 41, 74, 102, 132, 194, and 196 each coordinate Zn(2+).

This sequence belongs to the PHP family. Requires Zn(2+) as cofactor.

The protein is Probable phosphatase VV2_1469 of Vibrio vulnificus (strain CMCP6).